The following is a 930-amino-acid chain: Isoleucine--tRNA ligase (930 aa).

The segment at 1–21 (MRVKDTLNLGKTKFPMRGRLP) is disordered. The short motif at 57–67 (PYANGPIHIGH) is the 'HIGH' region element. Glu-555 lines the L-isoleucyl-5'-AMP pocket. The 'KMSKS' region signature appears at 596–600 (KMSKS). Lys-599 contacts ATP. Residues Cys-889, Cys-892, Cys-909, and Cys-912 each contribute to the Zn(2+) site.

It belongs to the class-I aminoacyl-tRNA synthetase family. IleS type 1 subfamily. As to quaternary structure, monomer. Zn(2+) serves as cofactor.

The protein localises to the cytoplasm. It carries out the reaction tRNA(Ile) + L-isoleucine + ATP = L-isoleucyl-tRNA(Ile) + AMP + diphosphate. Catalyzes the attachment of isoleucine to tRNA(Ile). As IleRS can inadvertently accommodate and process structurally similar amino acids such as valine, to avoid such errors it has two additional distinct tRNA(Ile)-dependent editing activities. One activity is designated as 'pretransfer' editing and involves the hydrolysis of activated Val-AMP. The other activity is designated 'posttransfer' editing and involves deacylation of mischarged Val-tRNA(Ile). The chain is Isoleucine--tRNA ligase from Limosilactobacillus fermentum (strain NBRC 3956 / LMG 18251) (Lactobacillus fermentum).